We begin with the raw amino-acid sequence, 159 residues long: Transcriptional repressor NrdR (159 aa).

Residues 1 to 26 form a disordered region; the sequence is MRCPFCAHDNSQVKDSRPSEDNTSIR. The segment at 3–34 is a zinc-finger region; the sequence is CPFCAHDNSQVKDSRPSEDNTSIRRRRQCEGC. The span at 11–24 shows a compositional bias: basic and acidic residues; that stretch reads SQVKDSRPSEDNTS. The ATP-cone domain maps to 49-139; it reads VVVVKSGERR…VYRDFTEARD (91 aa).

It belongs to the NrdR family. It depends on Zn(2+) as a cofactor.

Negatively regulates transcription of bacterial ribonucleotide reductase nrd genes and operons by binding to NrdR-boxes. In Novosphingobium aromaticivorans (strain ATCC 700278 / DSM 12444 / CCUG 56034 / CIP 105152 / NBRC 16084 / F199), this protein is Transcriptional repressor NrdR.